The following is a 247-amino-acid chain: MQTQVLFEHPLNEKMRTWLRIEFLIQQLTVNLPIVDHAGALHFFRNVSELLDVFERGEVRTELLKELDRQQRKLQTWIGVPGVDQSRIEALIQQLKAAGSVLISAPRIGQFLREDRLIALVRQRLSIPGGCCSFDLPTLHIWLHLPQAQRDSQVETWIASLNPLTQALTMVLDLIRQSAPFRKQTSLNGFYQDNGGDADLLRLNLSLDSQLYPQISGHKSRFAIRFMPLDSENGQVPERLNFELACC.

The protein belongs to the ZapD family. As to quaternary structure, interacts with FtsZ.

The protein localises to the cytoplasm. Functionally, cell division factor that enhances FtsZ-ring assembly. Directly interacts with FtsZ and promotes bundling of FtsZ protofilaments, with a reduction in FtsZ GTPase activity. The protein is Cell division protein ZapD of Shigella boydii serotype 4 (strain Sb227).